The primary structure comprises 157 residues: Cyclic pyranopterin monophosphate synthase (157 aa).

Substrate is bound by residues 74-76 and 112-113; these read MCH and ME. The active site involves Asp-127.

The protein belongs to the MoaC family. In terms of assembly, homohexamer; trimer of dimers.

The enzyme catalyses (8S)-3',8-cyclo-7,8-dihydroguanosine 5'-triphosphate = cyclic pyranopterin phosphate + diphosphate. The protein operates within cofactor biosynthesis; molybdopterin biosynthesis. Catalyzes the conversion of (8S)-3',8-cyclo-7,8-dihydroguanosine 5'-triphosphate to cyclic pyranopterin monophosphate (cPMP). The chain is Cyclic pyranopterin monophosphate synthase from Campylobacter jejuni subsp. jejuni serotype O:6 (strain 81116 / NCTC 11828).